The sequence spans 59 residues: Large ribosomal subunit protein bL32 (59 aa).

Disordered regions lie at residues 1–23 (MAVQ…DFLT) and 35–59 (EVHL…TKND). The segment covering 49–59 (RGKKVVKTKND) has biased composition (basic residues).

It belongs to the bacterial ribosomal protein bL32 family.

This chain is Large ribosomal subunit protein bL32, found in Burkholderia ambifaria (strain MC40-6).